Here is a 71-residue protein sequence, read N- to C-terminus: Large ribosomal subunit protein bL31 (71 aa).

Cys-16, Cys-18, Cys-37, and Cys-40 together coordinate Zn(2+).

Belongs to the bacterial ribosomal protein bL31 family. Type A subfamily. Part of the 50S ribosomal subunit. Zn(2+) is required as a cofactor.

Binds the 23S rRNA. The protein is Large ribosomal subunit protein bL31 of Pseudomonas entomophila (strain L48).